We begin with the raw amino-acid sequence, 191 residues long: Small ribosomal subunit protein uS4A (191 aa).

S50 and S161 each carry phosphoserine. The S4 RNA-binding domain maps to 107–181 (RRLQTQVFKL…CKRKRLRSQE (75 aa)). Y164 is modified (phosphotyrosine). Positions 166-191 (GGRPGRCKRKRLRSQEGGEGEEAEEE) are disordered. Residue S179 is modified to Phosphoserine.

It belongs to the universal ribosomal protein uS4 family. In terms of assembly, component of the small ribosomal subunit (SSU). Mature yeast ribosomes consist of a small (40S) and a large (60S) subunit. The 40S small subunit contains 1 molecule of ribosomal RNA (18S rRNA) and at least 33 different proteins. The large 60S subunit contains 3 rRNA molecules (25S, 5.8S and 5S rRNA) and at least 46 different proteins. Interacts with snoRNA U3. uS11 interacts with MPP10. Component of the ribosomal small subunit (SSU) processome composed of at least 40 protein subunits and snoRNA U3.

The protein localises to the cytoplasm. Functionally, component of the ribosome, a large ribonucleoprotein complex responsible for the synthesis of proteins in the cell. The small ribosomal subunit (SSU) binds messenger RNAs (mRNAs) and translates the encoded message by selecting cognate aminoacyl-transfer RNA (tRNA) molecules. The large subunit (LSU) contains the ribosomal catalytic site termed the peptidyl transferase center (PTC), which catalyzes the formation of peptide bonds, thereby polymerizing the amino acids delivered by tRNAs into a polypeptide chain. The nascent polypeptides leave the ribosome through a tunnel in the LSU and interact with protein factors that function in enzymatic processing, targeting, and the membrane insertion of nascent chains at the exit of the ribosomal tunnel. uS4 is involved in nucleolar processing of pre-18S ribosomal RNA and ribosome assembly. The polypeptide is Small ribosomal subunit protein uS4A (rps901) (Schizosaccharomyces pombe (strain 972 / ATCC 24843) (Fission yeast)).